A 93-amino-acid chain; its full sequence is Long neurotoxin 2 (93 aa).

The signal sequence occupies residues 1 to 21 (MKILLLTLVVVTIVCLDLAYT). 5 disulfide bridges follow: cysteine 24-cysteine 42, cysteine 35-cysteine 63, cysteine 48-cysteine 52, cysteine 67-cysteine 78, and cysteine 79-cysteine 84.

This sequence belongs to the three-finger toxin family. Long-chain subfamily. Type II alpha-neurotoxin sub-subfamily. As to expression, expressed by the venom gland.

The protein localises to the secreted. In terms of biological role, binds with high affinity to muscular (alpha-1/CHRNA1) and neuronal (alpha-7/CHRNA7) nicotinic acetylcholine receptor (nAChR) and inhibits acetylcholine from binding to the receptor, thereby impairing neuromuscular and neuronal transmission. This chain is Long neurotoxin 2, found in Hydrophis hardwickii (Hardwick's spine-bellied seasnake).